The primary structure comprises 79 residues: CDC42 small effector protein 1-B (79 aa).

2 S-palmitoyl cysteine lipidation sites follow: Cys10 and Cys11. The CRIB domain maps to 30–43 (IGEPMNFVHLTHIG). Positions 41 to 79 (HIGSGDMGASDGLPKAGTVQEQMRSKCGRDRQWSNSRVL) are disordered. Positions 63 to 72 (MRSKCGRDRQ) are enriched in basic and acidic residues.

It belongs to the CDC42SE/SPEC family.

The protein resides in the cytoplasm. It is found in the cytoskeleton. The protein localises to the cell membrane. Functionally, probably involved in the organization of the actin cytoskeleton by acting downstream of CDC42, inducing actin filament assembly. This chain is CDC42 small effector protein 1-B (cdc42se1-b), found in Xenopus laevis (African clawed frog).